The sequence spans 732 residues: Cullin-3A (732 aa).

In terms of domain architecture, Cullin neddylation spans 662-724 (DRKPQIEAAI…RDFLERDSTD (63 aa)). K676 participates in a covalent cross-link: Glycyl lysine isopeptide (Lys-Gly) (interchain with G-Cter in NEDD8).

The protein belongs to the cullin family. As to quaternary structure, interacts with CSN2 and RBX1A. Interacts with BTB/POZ domain-containing proteins BPM1, BPM2, BPM3, BPM6, BT1, BT2, BT3, BT5, AT1G01640, AT1G21780 and AT5G48510. Interacts with SR1IP1. Interacts with NPR3 and NPR4. Binds to NPR1; this interaction requires NPR3 and NPR4. In terms of processing, neddylated. Deneddylated via its interaction with the COP9 signalosome (CSN) complex.

In terms of biological role, component of the cullin-RING ubiquitin ligases (CRL), or CUL3-RBX1-BTB protein E3 ligase complexes which mediate the ubiquitination and subsequent proteasomal degradation of target proteins. The functional specificity of the CRL complex depends on the BTB domain-containing protein as the substrate recognition component. Involved in embryo pattern formation and endosperm development. Required for the normal division and organization of the root stem cells and columella root cap cells. Regulates primary root growth by an unknown pathway, but in an ethylene-dependent manner. Functions in distal root patterning, by an ethylene-independent mechanism. Functionally redundant with CUL3B. In Arabidopsis thaliana (Mouse-ear cress), this protein is Cullin-3A.